Reading from the N-terminus, the 60-residue chain is Short neurotoxin 1 (60 aa).

4 cysteine pairs are disulfide-bonded: C3–C22, C17–C39, C41–C52, and C53–C58.

This sequence belongs to the three-finger toxin family. Short-chain subfamily. Type I alpha-neurotoxin sub-subfamily. As to expression, expressed by the venom gland.

It is found in the secreted. Its function is as follows. Binds to muscle nicotinic acetylcholine receptor (nAChR) and inhibit acetylcholine from binding to the receptor, thereby impairing neuromuscular transmission. In Hydrophis ornatus (Ornate reef seasnake), this protein is Short neurotoxin 1.